A 150-amino-acid chain; its full sequence is Large ribosomal subunit protein bL9 (150 aa).

Belongs to the bacterial ribosomal protein bL9 family.

In terms of biological role, binds to the 23S rRNA. The polypeptide is Large ribosomal subunit protein bL9 (Yersinia pseudotuberculosis serotype I (strain IP32953)).